Consider the following 304-residue polypeptide: Homoserine O-acetyltransferase (304 aa).

Cys-142 (acyl-thioester intermediate) is an active-site residue. Substrate-binding residues include Lys-163 and Ser-191. The active-site Proton acceptor is the His-234. The active site involves Glu-236. Residue Arg-248 participates in substrate binding.

The protein belongs to the MetA family.

The protein localises to the cytoplasm. The enzyme catalyses L-homoserine + acetyl-CoA = O-acetyl-L-homoserine + CoA. The protein operates within amino-acid biosynthesis; L-methionine biosynthesis via de novo pathway; O-acetyl-L-homoserine from L-homoserine: step 1/1. Functionally, transfers an acetyl group from acetyl-CoA to L-homoserine, forming acetyl-L-homoserine. The sequence is that of Homoserine O-acetyltransferase from Thermotoga neapolitana (strain ATCC 49049 / DSM 4359 / NBRC 107923 / NS-E).